The following is a 352-amino-acid chain: DNA polymerase IV (352 aa).

The UmuC domain maps to 6–187 (IIHIDCDCFY…LPVSKLHGVG (182 aa)). Mg(2+) contacts are provided by D10 and D105. Residue E106 is part of the active site.

Belongs to the DNA polymerase type-Y family. Monomer. Requires Mg(2+) as cofactor.

It is found in the cytoplasm. The catalysed reaction is DNA(n) + a 2'-deoxyribonucleoside 5'-triphosphate = DNA(n+1) + diphosphate. Its function is as follows. Poorly processive, error-prone DNA polymerase involved in untargeted mutagenesis. Copies undamaged DNA at stalled replication forks, which arise in vivo from mismatched or misaligned primer ends. These misaligned primers can be extended by PolIV. Exhibits no 3'-5' exonuclease (proofreading) activity. May be involved in translesional synthesis, in conjunction with the beta clamp from PolIII. The chain is DNA polymerase IV from Ectopseudomonas mendocina (strain ymp) (Pseudomonas mendocina).